Consider the following 207-residue polypeptide: Ribosomal RNA small subunit methyltransferase G (207 aa).

Residues Gly-73, Leu-78, 124 to 125 (VE), and Arg-139 contribute to the S-adenosyl-L-methionine site.

Belongs to the methyltransferase superfamily. RNA methyltransferase RsmG family.

The protein localises to the cytoplasm. It carries out the reaction guanosine(527) in 16S rRNA + S-adenosyl-L-methionine = N(7)-methylguanosine(527) in 16S rRNA + S-adenosyl-L-homocysteine. Its function is as follows. Specifically methylates the N7 position of guanine in position 527 of 16S rRNA. The polypeptide is Ribosomal RNA small subunit methyltransferase G (Klebsiella pneumoniae subsp. pneumoniae (strain ATCC 700721 / MGH 78578)).